Here is a 197-residue protein sequence, read N- to C-terminus: Pyridoxal 5'-phosphate synthase subunit PdxT (197 aa).

50-52 (GES) contacts L-glutamine. Cys-82 functions as the Nucleophile in the catalytic mechanism. L-glutamine-binding positions include Arg-111 and 140 to 141 (IR). Residues His-176 and Glu-178 each act as charge relay system in the active site.

The protein belongs to the glutaminase PdxT/SNO family. In terms of assembly, in the presence of PdxS, forms a dodecamer of heterodimers. Only shows activity in the heterodimer.

The enzyme catalyses aldehydo-D-ribose 5-phosphate + D-glyceraldehyde 3-phosphate + L-glutamine = pyridoxal 5'-phosphate + L-glutamate + phosphate + 3 H2O + H(+). It carries out the reaction L-glutamine + H2O = L-glutamate + NH4(+). It participates in cofactor biosynthesis; pyridoxal 5'-phosphate biosynthesis. Functionally, catalyzes the hydrolysis of glutamine to glutamate and ammonia as part of the biosynthesis of pyridoxal 5'-phosphate. The resulting ammonia molecule is channeled to the active site of PdxS. The chain is Pyridoxal 5'-phosphate synthase subunit PdxT from Streptomyces griseus subsp. griseus (strain JCM 4626 / CBS 651.72 / NBRC 13350 / KCC S-0626 / ISP 5235).